We begin with the raw amino-acid sequence, 410 residues long: Inositol hexakisphosphate kinase 3 (410 aa).

Residue 211–219 (PCVLDLKMG) participates in substrate binding. A disordered region spans residues 333–358 (QEPPERAPGSPHPHEAPQAAHGSSPG).

It belongs to the inositol phosphokinase (IPK) family. Detected in brain.

Its subcellular location is the cytoplasm. The catalysed reaction is 1D-myo-inositol hexakisphosphate + ATP = 5-diphospho-1D-myo-inositol 1,2,3,4,6-pentakisphosphate + ADP. The enzyme catalyses 1-diphospho-1D-myo-inositol 2,3,4,5,6-pentakisphosphate + ATP + H(+) = 1,5-bis(diphospho)-1D-myo-inositol 2,3,4,6-tetrakisphosphate + ADP. Its function is as follows. Converts inositol hexakisphosphate (InsP6) to diphosphoinositol pentakisphosphate (InsP7/PP-InsP5). Converts 1,3,4,5,6-pentakisphosphate (InsP5) to PP-InsP4. The protein is Inositol hexakisphosphate kinase 3 (IP6K3) of Homo sapiens (Human).